Here is a 191-residue protein sequence, read N- to C-terminus: Small ribosomal subunit protein uS5 (191 aa).

The S5 DRBM domain maps to 20-83 (FADRLVAINR…EQAKRQMIRV (64 aa)). The segment at 158 to 191 (TSPRMVAQRRGKKVSDILKKDGEPAEAAAEPAEA) is disordered. Over residues 170–180 (KVSDILKKDGE) the composition is skewed to basic and acidic residues. A compositionally biased stretch (low complexity) spans 182 to 191 (AEAAAEPAEA).

It belongs to the universal ribosomal protein uS5 family. In terms of assembly, part of the 30S ribosomal subunit. Contacts proteins S4 and S8.

With S4 and S12 plays an important role in translational accuracy. Its function is as follows. Located at the back of the 30S subunit body where it stabilizes the conformation of the head with respect to the body. The sequence is that of Small ribosomal subunit protein uS5 from Dinoroseobacter shibae (strain DSM 16493 / NCIMB 14021 / DFL 12).